The chain runs to 142 residues: Peptide methionine sulfoxide reductase MsrB (142 aa).

Residues 2-125 (LKKDKSELTD…NSAAIQFIPY (124 aa)) form the MsrB domain. Cys-114 (nucleophile) is an active-site residue.

This sequence belongs to the MsrB Met sulfoxide reductase family.

The enzyme catalyses L-methionyl-[protein] + [thioredoxin]-disulfide + H2O = L-methionyl-(R)-S-oxide-[protein] + [thioredoxin]-dithiol. The polypeptide is Peptide methionine sulfoxide reductase MsrB (Staphylococcus aureus (strain bovine RF122 / ET3-1)).